A 75-amino-acid chain; its full sequence is Lividin-3 (75 aa).

The signal sequence occupies residues 1 to 22 (MFTLKKSLLLLFFLGTISLSLC). Residues 23–40 (EEERDADEDEGEMTEEEV) constitute a propeptide that is removed on maturation. A disulfide bond links Cys-69 and Cys-75.

As to expression, expressed by the skin glands.

The protein localises to the secreted. Functionally, antimicrobial peptide. This Odorrana livida (Green mountain frog) protein is Lividin-3.